The chain runs to 141 residues: Nucleoside diphosphate kinase (141 aa).

The ATP site is built by K11, F59, R87, T93, R104, and N114. H117 functions as the Pros-phosphohistidine intermediate in the catalytic mechanism.

This sequence belongs to the NDK family. In terms of assembly, homotetramer. Requires Mg(2+) as cofactor.

It localises to the cytoplasm. It catalyses the reaction a 2'-deoxyribonucleoside 5'-diphosphate + ATP = a 2'-deoxyribonucleoside 5'-triphosphate + ADP. It carries out the reaction a ribonucleoside 5'-diphosphate + ATP = a ribonucleoside 5'-triphosphate + ADP. Functionally, major role in the synthesis of nucleoside triphosphates other than ATP. The ATP gamma phosphate is transferred to the NDP beta phosphate via a ping-pong mechanism, using a phosphorylated active-site intermediate. In Nitrosospira multiformis (strain ATCC 25196 / NCIMB 11849 / C 71), this protein is Nucleoside diphosphate kinase.